The following is a 136-amino-acid chain: Histone H3.2 (136 aa).

Positions 1-45 are disordered; that stretch reads MARTKQTARKSTGGKAPRKQLATKAARKSAPATGGVKKPHRYRPG. The residue at position 3 (Arg3) is an Asymmetric dimethylarginine; by PRMT6; alternate. Arg3 bears the Citrulline; alternate mark. A Phosphothreonine; by HASPIN and VRK1 modification is found at Thr4. Position 5 is an allysine; alternate (Lys5). Lys5 carries the post-translational modification N6,N6,N6-trimethyllysine; alternate. An N6,N6-dimethyllysine; alternate modification is found at Lys5. Position 5 is an N6-(2-hydroxyisobutyryl)lysine; alternate (Lys5). Position 5 is an N6-(beta-hydroxybutyryl)lysine; alternate (Lys5). At Lys5 the chain carries N6-acetyllysine; alternate. Lys5 is subject to N6-crotonyllysine; alternate. Lys5 carries the post-translational modification N6-methyllysine; alternate. Position 6 is a 5-glutamyl dopamine; alternate (Gln6). Gln6 is modified (5-glutamyl serotonin; alternate). Thr7 carries the post-translational modification Phosphothreonine; by PKC. A Citrulline; alternate modification is found at Arg9. Arg9 is subject to Symmetric dimethylarginine; by PRMT5; alternate. Residue Lys10 is modified to N6,N6,N6-trimethyllysine; alternate. Residue Lys10 is modified to N6,N6-dimethyllysine; alternate. Lys10 carries the post-translational modification N6-(2-hydroxyisobutyryl)lysine; alternate. Lys10 carries the N6-(beta-hydroxybutyryl)lysine; alternate modification. Lys10 bears the N6-acetyllysine; alternate mark. Lys10 bears the N6-crotonyllysine; alternate mark. Residue Lys10 is modified to N6-methyllysine; alternate. Position 10 is an N6-lactoyllysine; alternate (Lys10). Ser11 is modified (ADP-ribosylserine; alternate). Ser11 is subject to Phosphoserine; alternate; by AURKB, AURKC, RPS6KA3, RPS6KA4 and RPS6KA5. The residue at position 12 (Thr12) is a Phosphothreonine; by PKC. Position 15 is an N6-(2-hydroxyisobutyryl)lysine; alternate (Lys15). The residue at position 15 (Lys15) is an N6-(beta-hydroxybutyryl)lysine; alternate. Residue Lys15 is modified to N6-acetyllysine; alternate. Lys15 bears the N6-lactoyllysine; alternate mark. The residue at position 15 (Lys15) is an N6-glutaryllysine; alternate. Residue Lys15 is modified to N6-succinyllysine; alternate. Arg18 bears the Citrulline; alternate mark. The residue at position 18 (Arg18) is an Asymmetric dimethylarginine; by CARM1; alternate. N6-(2-hydroxyisobutyryl)lysine; alternate occurs at positions 19 and 24. Lys19 and Lys24 each carry N6-(beta-hydroxybutyryl)lysine; alternate. 2 positions are modified to N6-acetyllysine; alternate: Lys19 and Lys24. Lys19 and Lys24 each carry N6-crotonyllysine; alternate. N6-methyllysine; alternate occurs at positions 19 and 24. N6-lactoyllysine; alternate is present on residues Lys19 and Lys24. 2 positions are modified to N6-glutaryllysine; alternate: Lys19 and Lys24. Residues Lys19 and Lys24 each carry the N6-butyryllysine; alternate modification. Residue Lys19 is the site of N6-decanoyllysine attachment. The residue at position 27 (Arg27) is a Citrulline. Lys28 is modified (N6,N6,N6-trimethyllysine; alternate). The residue at position 28 (Lys28) is an N6,N6-dimethyllysine; alternate. Lys28 bears the N6-(2-hydroxyisobutyryl)lysine; alternate mark. N6-acetyllysine; alternate is present on Lys28. Lys28 carries the N6-crotonyllysine; alternate modification. Residue Lys28 is modified to N6-methyllysine; alternate. N6-lactoyllysine; alternate is present on Lys28. At Lys28 the chain carries N6-glutaryllysine; alternate. Ser29 carries the post-translational modification ADP-ribosylserine; alternate. Ser29 bears the Phosphoserine; alternate; by AURKB, AURKC and RPS6KA5 mark. Lys37 is modified (N6,N6,N6-trimethyllysine; alternate). Lys37 is modified (N6,N6-dimethyllysine; alternate). The residue at position 37 (Lys37) is an N6-(2-hydroxyisobutyryl)lysine; alternate. Lys37 bears the N6-acetyllysine; alternate mark. An N6-methyllysine; alternate modification is found at Lys37. Position 38 is an N6-methyllysine (Lys38). Residue Tyr42 is modified to Phosphotyrosine. Lys57 bears the N6,N6,N6-trimethyllysine; alternate mark. Lys57 carries the post-translational modification N6-(2-hydroxyisobutyryl)lysine; alternate. Lys57 carries the post-translational modification N6-(beta-hydroxybutyryl)lysine; alternate. Lys57 is modified (N6-acetyllysine; alternate). At Lys57 the chain carries N6-crotonyllysine; alternate. Lys57 carries the post-translational modification N6-lactoyllysine; alternate. The residue at position 57 (Lys57) is an N6-glutaryllysine; alternate. N6-succinyllysine; alternate is present on Lys57. An N6-methyllysine; by EHMT2; alternate modification is found at Lys57. Ser58 bears the Phosphoserine mark. Residues Lys65 and Lys80 each carry the N6-(2-hydroxyisobutyryl)lysine; alternate modification. Residues Lys65 and Lys80 each carry the N6-methyllysine; alternate modification. The residue at position 80 (Lys80) is an N6,N6,N6-trimethyllysine; alternate. Lys80 bears the N6,N6-dimethyllysine; alternate mark. Residue Lys80 is modified to N6-acetyllysine; alternate. An N6-lactoyllysine; alternate modification is found at Lys80. Position 80 is an N6-glutaryllysine; alternate (Lys80). Lys80 carries the N6-succinyllysine; alternate modification. Thr81 bears the Phosphothreonine mark. Position 87 is a phosphoserine (Ser87). Position 108 is a phosphothreonine (Thr108). The S-palmitoyl cysteine moiety is linked to residue Cys111. N6-acetyllysine; alternate occurs at positions 116 and 123. Lys116 and Lys123 each carry N6-glutaryllysine; alternate. Position 123 is an N6-(2-hydroxyisobutyryl)lysine; alternate (Lys123). Lys123 is modified (N6-methyllysine; alternate). Position 123 is an N6-succinyllysine; alternate (Lys123).

It belongs to the histone H3 family. The nucleosome is a histone octamer containing two molecules each of H2A, H2B, H3 and H4 assembled in one H3-H4 heterotetramer and two H2A-H2B heterodimers. The octamer wraps approximately 147 bp of DNA. During nucleosome assembly the chaperone ASF1A interacts with the histone H3-H4 heterodimer (via C-terminus of H3); this interaction is direct. Interacts with DNAJC9, CHAF1A and CHAF1B. Interacts with NASP; NASP is a histone chaperone that stabilizes and maintains a soluble pool of Histone H3-H4 dimers. In terms of processing, acetylation is generally linked to gene activation. Acetylation on Lys-10 (H3K9ac) impairs methylation at Arg-9 (H3R8me2s). Acetylation on Lys-19 (H3K18ac) and Lys-24 (H3K24ac) favors methylation at Arg-18 (H3R17me). Acetylation at Lys-123 (H3K122ac) by EP300/p300 plays a central role in chromatin structure: localizes at the surface of the histone octamer and stimulates transcription, possibly by promoting nucleosome instability. Citrullination at Arg-9 (H3R8ci) and/or Arg-18 (H3R17ci) by PADI4 impairs methylation and represses transcription. Post-translationally, asymmetric dimethylation at Arg-18 (H3R17me2a) by CARM1 is linked to gene activation. Symmetric dimethylation at Arg-9 (H3R8me2s) by PRMT5 is linked to gene repression. Asymmetric dimethylation at Arg-3 (H3R2me2a) by PRMT6 is linked to gene repression and is mutually exclusive with H3 Lys-5 methylation (H3K4me2 and H3K4me3). H3R2me2a is present at the 3' of genes regardless of their transcription state and is enriched on inactive promoters, while it is absent on active promoters. In terms of processing, methylation at Lys-5 (H3K4me), Lys-37 (H3K36me) and Lys-80 (H3K79me) are linked to gene activation. Methylation at Lys-5 (H3K4me) facilitates subsequent acetylation of H3 and H4. Methylation at Lys-80 (H3K79me) is associated with DNA double-strand break (DSB) responses and is a specific target for TP53BP1. Methylation at Lys-10 (H3K9me) and Lys-28 (H3K27me) are linked to gene repression. Methylation at Lys-10 (H3K9me) is a specific target for HP1 proteins (CBX1, CBX3 and CBX5) and prevents subsequent phosphorylation at Ser-11 (H3S10ph) and acetylation of H3 and H4. Methylation at Lys-5 (H3K4me) and Lys-80 (H3K79me) require preliminary monoubiquitination of H2B at 'Lys-120'. Methylation at Lys-10 (H3K9me) and Lys-28 (H3K27me) are enriched in inactive X chromosome chromatin. Monomethylation at Lys-57 (H3K56me1) by EHMT2/G9A in G1 phase promotes interaction with PCNA and is required for DNA replication. Phosphorylated at Thr-4 (H3T3ph) by VRK1. Phosphorylated at Thr-4 (H3T3ph) by HASPIN during prophase and dephosphorylated during anaphase. Phosphorylation at Ser-11 (H3S10ph) by AURKB is crucial for chromosome condensation and cell-cycle progression during mitosis and meiosis. In addition phosphorylation at Ser-11 (H3S10ph) by RPS6KA4 and RPS6KA5 is important during interphase because it enables the transcription of genes following external stimulation, like mitogens, stress, growth factors or UV irradiation and result in the activation of genes, such as c-fos and c-jun. Phosphorylation at Ser-11 (H3S10ph), which is linked to gene activation, prevents methylation at Lys-10 (H3K9me) but facilitates acetylation of H3 and H4. Phosphorylation at Ser-11 (H3S10ph) by AURKB mediates the dissociation of HP1 proteins (CBX1, CBX3 and CBX5) from heterochromatin. Phosphorylation at Ser-11 (H3S10ph) is also an essential regulatory mechanism for neoplastic cell transformation. Phosphorylated at Ser-29 (H3S28ph) by MAP3K20 isoform 1, RPS6KA5 or AURKB during mitosis or upon ultraviolet B irradiation. Phosphorylation at Thr-7 (H3T6ph) by PRKCB is a specific tag for epigenetic transcriptional activation that prevents demethylation of Lys-5 (H3K4me) by LSD1/KDM1A. At centromeres, specifically phosphorylated at Thr-12 (H3T11ph) from prophase to early anaphase, by DAPK3 and PKN1. Phosphorylation at Thr-12 (H3T11ph) by PKN1 or isoform M2 of PKM (PKM2) is a specific tag for epigenetic transcriptional activation that promotes demethylation of Lys-10 (H3K9me) by KDM4C/JMJD2C. Phosphorylation at Tyr-42 (H3Y41ph) by JAK2 promotes exclusion of CBX5 (HP1 alpha) from chromatin. Post-translationally, monoubiquitinated by RAG1 in lymphoid cells, monoubiquitination is required for V(D)J recombination. Ubiquitinated by the CUL4-DDB-RBX1 complex in response to ultraviolet irradiation. This may weaken the interaction between histones and DNA and facilitate DNA accessibility to repair proteins. In terms of processing, lysine deamination at Lys-5 (H3K4all) to form allysine is mediated by LOXL2. Allysine formation by LOXL2 only takes place on H3K4me3 and results in gene repression. Crotonylation (Kcr) is specifically present in male germ cells and marks testis-specific genes in post-meiotic cells, including X-linked genes that escape sex chromosome inactivation in haploid cells. Crotonylation marks active promoters and enhancers and confers resistance to transcriptional repressors. It is also associated with post-meiotically activated genes on autosomes. Post-translationally, butyrylation of histones marks active promoters and competes with histone acetylation. It is present during late spermatogenesis. In terms of processing, succinylation at Lys-80 (H3K79succ) by KAT2A takes place with a maximum frequency around the transcription start sites of genes. It gives a specific tag for epigenetic transcription activation. Desuccinylation at Lys-123 (H3K122succ) by SIRT7 in response to DNA damage promotes chromatin condensation and double-strand breaks (DSBs) repair. Serine ADP-ribosylation by PARP1 or PARP2 constitutes the primary form of ADP-ribosylation of proteins in response to DNA damage. Serine ADP-ribosylation at Ser-11 (H3S10ADPr) promotes recruitment of CHD1L. H3S10ADPr is mutually exclusive with phosphorylation at Ser-11 (H3S10ph) and impairs acetylation at Lys-10 (H3K9ac). Post-translationally, serotonylated by TGM2 at Gln-6 (H3Q5ser) during serotonergic neuron differentiation. H3Q5ser is associated with trimethylation of Lys-5 (H3K4me3) and enhances general transcription factor IID (TFIID) complex-binding to H3K4me3, thereby facilitating transcription. In terms of processing, dopaminylated by TGM2 at Gln-6 (H3Q5dop) in ventral tegmental area (VTA) neurons. H3Q5dop mediates neurotransmission-independent role of nuclear dopamine by regulating relapse-related transcriptional plasticity in the reward system. Lactylated in macrophages by EP300/P300 by using lactoyl-CoA directly derived from endogenous or exogenous lactate, leading to stimulates gene transcription.

It is found in the nucleus. The protein resides in the chromosome. In terms of biological role, core component of nucleosome. Nucleosomes wrap and compact DNA into chromatin, limiting DNA accessibility to the cellular machineries which require DNA as a template. Histones thereby play a central role in transcription regulation, DNA repair, DNA replication and chromosomal stability. DNA accessibility is regulated via a complex set of post-translational modifications of histones, also called histone code, and nucleosome remodeling. This Cricetulus longicaudatus (Long-tailed dwarf hamster) protein is Histone H3.2.